The primary structure comprises 100 residues: MAVKTGIAIGLNKGKKVTQMTPAPKISYKKGAASNRTKFVRSLVREIAGLSPYERRLIDLIRNSGEKRARKVAKKRLGSFTRAKAKVEEMNNIIAASRRH.

It belongs to the eukaryotic ribosomal protein eL36 family. In terms of assembly, component of the large ribosomal subunit (LSU). Mature yeast ribosomes consist of a small (40S) and a large (60S) subunit. The 40S small subunit contains 1 molecule of ribosomal RNA (18S rRNA) and 33 different proteins (encoded by 57 genes). The large 60S subunit contains 3 rRNA molecules (25S, 5.8S and 5S rRNA) and 46 different proteins (encoded by 81 genes).

It localises to the cytoplasm. In terms of biological role, component of the ribosome, a large ribonucleoprotein complex responsible for the synthesis of proteins in the cell. The small ribosomal subunit (SSU) binds messenger RNAs (mRNAs) and translates the encoded message by selecting cognate aminoacyl-transfer RNA (tRNA) molecules. The large subunit (LSU) contains the ribosomal catalytic site termed the peptidyl transferase center (PTC), which catalyzes the formation of peptide bonds, thereby polymerizing the amino acids delivered by tRNAs into a polypeptide chain. The nascent polypeptides leave the ribosome through a tunnel in the LSU and interact with protein factors that function in enzymatic processing, targeting, and the membrane insertion of nascent chains at the exit of the ribosomal tunnel. The polypeptide is Large ribosomal subunit protein eL36B (Saccharomyces cerevisiae (strain ATCC 204508 / S288c) (Baker's yeast)).